Reading from the N-terminus, the 1163-residue chain is MFSRKKRELMKTPSISKKNRAGSPSPQPSGPHFISGETEAVSRPENPFNELPSDLPKELPRKDGADAVFPGTSLELPAGSSGVKATGTLKRPTSLSRHASAAGFPLSGAASWTLGRSHRSPLTAASPGELPTEGTGPDVVEDISHLLADVARFAEGLEKLKECVLRDDLLEARRPLAHECLGEALRVMRQIISKYPLLNTVETLTAAGTLIAKVKAFHYESNNDLEKQEFEKALETIAVAFSSAVSEFLMGEVDSSTLLAVPPGDSSQSMESLYGSGSEGTPPSLDDCDAGCLPAEEVDVLLQRCEGGVDAALLYAKNMAKYMKDLISYLEKRTTLEMEFAKGLQKMAHNCRQSVTQEPHMPLLSIYSLALEQDLEFGHGMVQAVGTLQTQTFMQPLTLRRLEHEKRRKEIKEAWHRAQRKLQEAESNLRKAKQGYTQRCEDHDKARFLVAKAEEEQAGTAPGAGSTATKTLDKRRRLEEEAKNKAEEAMATYRTCVADAKTQKQELEDTKVTALRQIQEVIRQSDQTIKSATISYYQMMHMQTAPLPVHFQMLCESSKLYDPGQQYASHVRQLQRDQEPDVHYDFEPHVSANAWSPVMRARKSSFNVSDVAGPEAAGSPPEEGGCIEGTPVKGHRAGRGHQVHKSWPLSISDSASGLDPGPGAGDFKKFERTSSSGTMSSTEELVDPEGGAGASAFEQADLNGMTPELPVAVPSGPFRHEGLSKAARTHRLRKLRTPAKCRECNSYVYFQGAECEECCLACHKKCLETLAIQCGHKKLQGRLQLFGQDFSHAARSAPDGVPFIVKKCVCEIERRALRTKGIYRVNGVKTRVEKLCQAFENGKELVELSQASPHDISNVLKLYLRQLPEPLISFRLYHELVGLAKDSLKAEAEAKAASRGRQDSSESEAVAVAMAGRLRELLRDLPPENRASLQYLLRHLRRIVEVEQDNKMTPGNLGIVFGPTLLRPRPTEATVSLSSLVDYPHQARVIETLIVHYGLVFEEEPEEIPGGQDESSNQRAEVVVQVPYLEAGEGVVYPLQEAAEDGCRESRVVSNDSDSDLEEASELLSSSEASALCRLSFLEQQQSEASLEEASGSHSGSEEQLETTAREDGDGDEDSPAQRLSGFNTNQSNNVLQTPLPPMRLRGGRITLGSCRERQPEFV.

The disordered stretch occupies residues 1–99 (MFSRKKRELM…KRPTSLSRHA (99 aa)). 2 positions are modified to phosphoserine: S23 and S25. Over residues 55–65 (LPKELPRKDGA) the composition is skewed to basic and acidic residues. Phosphoserine occurs at positions 100, 120, and 126. Disordered stretches follow at residues 118–137 (HRSPLTAASPGELPTEGTGP), 262–282 (PPGDSSQSMESLYGSGSEGTP), and 454–475 (EEEQAGTAPGAGSTATKTLDKR). The 271-residue stretch at 296-566 (EEVDVLLQRC…SSKLYDPGQQ (271 aa)) folds into the F-BAR domain. Residues 403-526 (EHEKRRKEIK…QIQEVIRQSD (124 aa)) are a coiled coil. The span at 458–470 (AGTAPGAGSTATK) shows a compositional bias: low complexity. Phosphoserine is present on residues S596, S605, and S619. The disordered stretch occupies residues 610–695 (DVAGPEAAGS…VDPEGGAGAS (86 aa)). Residues 633–644 (KGHRAGRGHQVH) show a composition bias toward basic residues. At S646 the chain carries Phosphoserine. Positions 673-682 (TSSSGTMSST) are enriched in low complexity. The segment at 729–774 (THRLRKLRTPAKCRECNSYVYFQGAECEECCLACHKKCLETLAIQC) adopts a Phorbol-ester/DAG-type zinc-finger fold. Residues 788-1001 (QDFSHAARSA…TLIVHYGLVF (214 aa)) enclose the Rho-GAP domain. Phosphoserine is present on residues S976, S1054, S1057, and S1059. Disordered regions lie at residues 1042–1067 (AAEDGCRESRVVSNDSDSDLEEASEL) and 1087–1163 (SEAS…PEFV). Residues 1087-1099 (SEASLEEASGSHS) show a composition bias toward low complexity. A compositionally biased stretch (polar residues) spans 1125-1137 (SGFNTNQSNNVLQ).

It is found in the cytoplasm. The protein localises to the cell projection. The protein resides in the ruffle membrane. Functionally, contains a GTPase activator for the Rho-type GTPases (RhoGAP) domain that would be able to negatively regulate the actin cytoskeleton as well as cell spreading. However, also contains N-terminally a BAR-domin which is able to play an autoinhibitory effect on this RhoGAP activity. This is Rho GTPase-activating protein 45 from Pongo abelii (Sumatran orangutan).